Here is a 249-residue protein sequence, read N- to C-terminus: Neurotrophic factor BDNF precursor form (249 aa).

An N-terminal signal peptide occupies residues 1 to 18; sequence MTILFLTMVISYFGCMKA. The propeptide occupies 19–130; sequence APMKEANVHG…AANMSMRVRR (112 aa). An N-linked (GlcNAc...) asparagine glycan is attached at asparagine 123. Cystine bridges form between cysteine 143-cysteine 210, cysteine 188-cysteine 239, and cysteine 198-cysteine 241.

It belongs to the NGF-beta family. As to quaternary structure, monomers and homodimers. Binds to NTRK2/TRKB. Can form heterodimers with other neurotrophin family members, such as NTF3 and NTF4 (in vitro), but the physiological relevance of this is not clear. BDNF precursor form: interacts with the heterodimer formed by NGFR and SORCS2. Mature BDNF has much lower affinity for the heterodimer formed by NGFR and SORCS2. In terms of processing, N-glycosylated and glycosulfated, contrary to mature BDNF. Mature BDNF is produced by proteolytic removal of the propeptide, catalyzed by a FURIN family member. In addition, the precursor form is proteolytically cleaved within the propeptide, but this is not an obligatory intermediate for the production of mature BDNF. Can be converted into mature BDNF by plasmin (PLG).

Its subcellular location is the secreted. In terms of biological role, important signaling molecule that activates signaling cascades downstream of NTRK2. During development, promotes the survival and differentiation of selected neuronal populations of the peripheral and central nervous systems. Participates in axonal growth, pathfinding and in the modulation of dendritic growth and morphology. Major regulator of synaptic transmission and plasticity at adult synapses in many regions of the CNS. The versatility of BDNF is emphasized by its contribution to a range of adaptive neuronal responses including long-term potentiation (LTP), long-term depression (LTD), certain forms of short-term synaptic plasticity, as well as homeostatic regulation of intrinsic neuronal excitability. Important signaling molecule that activates signaling cascades downstream of NTRK2. Activates signaling cascades via the heterodimeric receptor formed by NGFR and SORCS2. Signaling via NGFR and SORCS2 plays a role in synaptic plasticity and long-term depression (LTD). Binding to NGFR and SORCS2 promotes neuronal apoptosis. Promotes neuronal growth cone collapse. This Rattus norvegicus (Rat) protein is Neurotrophic factor BDNF precursor form (Bdnf).